The chain runs to 619 residues: MSAPNQNTLWARTFVSELAASGVDTVCISPGSRSTPLTVAFDRHDSIETFSHLDERSAAYFALGRARRTGSVTPVVCTSGTAAANYHPAVIEASQARVPLLVLTADRPPELHDSGANQTVDQTKLYGDAVRWFHDIGEPEPTARKLRSLRTTAARSIMTATDTPAGPVHLNFPFRKPLEPTPVPGDIPDDLSEESITGRDGAFVESTTGNRVLDENSVNRIAQSLSTSRGLIVVGPMTIPGVDPEAVAAFAHASGFPVLADPLSGIRYGGLTRTTPIIGGYDGYLTSELWDQWPDPDVVLRFGASPTSKPLRQYLESTSPTQYLVDPAGEWREATFTATDIVVADPTQLLWQLSRALNTPGSSTWRQRWIEADKAHTDVLANTDSSAHQSLAATNSDSSTDDIIENTDEEGSNESDRWFCEGRILSDVMTAAPDPATIFVSNSMPVRDLDRFGSPTTQNRTVLGNRGASGIDGIISTALGAGSALATTEHLIAITGDLAYYHDMNGLAALERCDVTATIVLINNDGGGIFHKLPIESYDPPFTTQFVTPHGLDFEPTEDIYDLSFARVRGTDRDGFHTAFTEATTTTGSHVIEVVTDSESSHRVREQLHDRVIKRILDN.

Residues 385–398 (SSAHQSLAATNSDS) are compositionally biased toward polar residues. The interval 385-415 (SSAHQSLAATNSDSSTDDIIENTDEEGSNES) is disordered. The span at 399–413 (STDDIIENTDEEGSN) shows a compositional bias: acidic residues.

This sequence belongs to the TPP enzyme family. MenD subfamily. Homodimer. Requires Mg(2+) as cofactor. It depends on Mn(2+) as a cofactor. The cofactor is thiamine diphosphate.

It catalyses the reaction isochorismate + 2-oxoglutarate + H(+) = 5-enolpyruvoyl-6-hydroxy-2-succinyl-cyclohex-3-ene-1-carboxylate + CO2. Its pathway is quinol/quinone metabolism; 1,4-dihydroxy-2-naphthoate biosynthesis; 1,4-dihydroxy-2-naphthoate from chorismate: step 2/7. The protein operates within quinol/quinone metabolism; menaquinone biosynthesis. In terms of biological role, catalyzes the thiamine diphosphate-dependent decarboxylation of 2-oxoglutarate and the subsequent addition of the resulting succinic semialdehyde-thiamine pyrophosphate anion to isochorismate to yield 2-succinyl-5-enolpyruvyl-6-hydroxy-3-cyclohexene-1-carboxylate (SEPHCHC). The protein is 2-succinyl-5-enolpyruvyl-6-hydroxy-3-cyclohexene-1-carboxylate synthase of Haloquadratum walsbyi (strain DSM 16790 / HBSQ001).